The primary structure comprises 122 residues: uncharacterized protein (122 aa).

A compositionally biased stretch (polar residues) spans 79 to 90 (NERVTSRVTNSR). The disordered stretch occupies residues 79-122 (NERVTSRVTNSRTESESNGNGNATGNTSSNANSNGNANGIYIRK). Residues 94–122 (ESNGNGNATGNTSSNANSNGNANGIYIRK) show a composition bias toward low complexity.

This is an uncharacterized protein from Leptolyngbya boryana (Plectonema boryanum).